The chain runs to 555 residues: Probable portal protein (555 aa).

This sequence belongs to the podoviridae head-to-tail connector protein family. Homododecamer.

Its subcellular location is the virion. Its function is as follows. Forms the portal vertex of the capsid. This portal plays critical roles in head assembly, genome packaging, neck/tail attachment, and genome ejection. The portal protein multimerizes as a single ring-shaped homododecamer arranged around a central channel. The protein is Probable portal protein of Bordetella bronchiseptica (Alcaligenes bronchisepticus).